Consider the following 352-residue polypeptide: Neutral protease 2 (352 aa).

The first 19 residues, 1–19 (MRVTTLSTALFALASTAVS), serve as a signal peptide directing secretion. Residues 20–175 (APTAGSSSPG…TKALSQLTRR (156 aa)) constitute a propeptide that is removed on maturation. 3 disulfides stabilise this stretch: cysteine 181-cysteine 253, cysteine 260-cysteine 278, and cysteine 292-cysteine 352. Histidine 303 contacts Zn(2+). Residue glutamate 304 is part of the active site. 2 residues coordinate Zn(2+): histidine 307 and aspartate 318.

Belongs to the peptidase M35 family. Zn(2+) is required as a cofactor.

It carries out the reaction Preferential cleavage of bonds with hydrophobic residues in P1'. Also 3-Asn-|-Gln-4 and 8-Gly-|-Ser-9 bonds in insulin B chain.. Its function is as follows. Metalloprotease that shows high activities on basic nuclear substrates such as histone and protamine. The chain is Neutral protease 2 from Aspergillus oryzae (strain ATCC 42149 / RIB 40) (Yellow koji mold).